Reading from the N-terminus, the 98-residue chain is C-X-C motif chemokine 10 (98 aa).

Positions 1-21 (MNPSAAVVLCLVLLSLSGTQG) are cleaved as a signal peptide. Position 26 is a citrulline (Arg26). 2 disulfides stabilise this stretch: Cys30/Cys57 and Cys32/Cys74.

It belongs to the intercrine alpha (chemokine CxC) family. As to quaternary structure, monomer, dimer, and tetramer. Interacts with CXCR3 (via N-terminus). In terms of tissue distribution, in the central nervous system, CXCL10 is predominantly localized to activated neurons. Expressed in both microglia and astrocytes.

It localises to the secreted. Pro-inflammatory cytokine that is involved in a wide variety of processes such as chemotaxis, differentiation, and activation of peripheral immune cells, regulation of cell growth, apoptosis and modulation of angiostatic effects. Plays thereby an important role during viral infections by stimulating the activation and migration of immune cells to the infected sites. Mechanistically, binding of CXCL10 to the CXCR3 receptor activates G protein-mediated signaling and results in downstream activation of phospholipase C-dependent pathway, an increase in intracellular calcium production and actin reorganization. In turn, recruitment of activated Th1 lymphocytes occurs at sites of inflammation. Activation of the CXCL10/CXCR3 axis also plays an important role in neurons in response to brain injury for activating microglia, the resident macrophage population of the central nervous system, and directing them to the lesion site. This recruitment is an essential element for neuronal reorganization. This chain is C-X-C motif chemokine 10 (Cxcl10), found in Rattus norvegicus (Rat).